The sequence spans 337 residues: Protein OPG055 (337 aa).

Belongs to the orthopoxvirus OPG055 family.

Functionally, stimulates increases in peripheral microtubule dynamics and may increase the motility of the infected cells, contributing to cell-to-cell spread of the virus. Seems to inhibit the signaling via the GTPase RHOA and DIAPH1/mDia. The sequence is that of Protein OPG055 (OPG055) from Homo sapiens (Human).